We begin with the raw amino-acid sequence, 467 residues long: 5'-nucleotidase domain-containing protein 1 (467 aa).

D16 functions as the Nucleophile in the catalytic mechanism. Residues D16 and D18 each coordinate Mg(2+). D18 (proton donor) is an active-site residue. K181 carries the post-translational modification N6-acetyllysine. D323 contacts Mg(2+).

Belongs to the 5'(3')-deoxyribonucleotidase family.

The protein is 5'-nucleotidase domain-containing protein 1 (Nt5dc1) of Mus musculus (Mouse).